Reading from the N-terminus, the 188-residue chain is Acireductone dioxygenase (188 aa).

Fe(2+) contacts are provided by histidine 97, histidine 99, glutamate 103, and histidine 141. Ni(2+)-binding residues include histidine 97, histidine 99, glutamate 103, and histidine 141.

Belongs to the acireductone dioxygenase (ARD) family. Monomer. Fe(2+) serves as cofactor. Ni(2+) is required as a cofactor.

The enzyme catalyses 1,2-dihydroxy-5-(methylsulfanyl)pent-1-en-3-one + O2 = 3-(methylsulfanyl)propanoate + CO + formate + 2 H(+). It carries out the reaction 1,2-dihydroxy-5-(methylsulfanyl)pent-1-en-3-one + O2 = 4-methylsulfanyl-2-oxobutanoate + formate + 2 H(+). Its pathway is amino-acid biosynthesis; L-methionine biosynthesis via salvage pathway; L-methionine from S-methyl-5-thio-alpha-D-ribose 1-phosphate: step 5/6. Its function is as follows. Catalyzes 2 different reactions between oxygen and the acireductone 1,2-dihydroxy-3-keto-5-methylthiopentene (DHK-MTPene) depending upon the metal bound in the active site. Fe-containing acireductone dioxygenase (Fe-ARD) produces formate and 2-keto-4-methylthiobutyrate (KMTB), the alpha-ketoacid precursor of methionine in the methionine recycle pathway. Ni-containing acireductone dioxygenase (Ni-ARD) produces methylthiopropionate, carbon monoxide and formate, and does not lie on the methionine recycle pathway. The sequence is that of Acireductone dioxygenase from Xanthomonas euvesicatoria pv. vesicatoria (strain 85-10) (Xanthomonas campestris pv. vesicatoria).